The chain runs to 149 residues: Small ribosomal subunit protein bS16 (149 aa).

The tract at residues 115–149 (KLKAAKSEADAKAKAEAEAAATEEAPAEEPAAEAE) is disordered. Residues 119–131 (AKSEADAKAKAEA) show a composition bias toward basic and acidic residues. The span at 139 to 149 (APAEEPAAEAE) shows a compositional bias: acidic residues.

The protein belongs to the bacterial ribosomal protein bS16 family.

This Bifidobacterium adolescentis (strain ATCC 15703 / DSM 20083 / NCTC 11814 / E194a) protein is Small ribosomal subunit protein bS16.